A 385-amino-acid chain; its full sequence is GDSL esterase/lipase At5g08460 (385 aa).

Residues 1–35 (MHDSEIFKFKDMMMMSCTVQTLVLVPWFLVVFVLA) form the signal peptide. Catalysis depends on Ser56, which acts as the Nucleophile. N-linked (GlcNAc...) asparagine glycosylation is found at Asn218 and Asn285. Active-site residues include Asp350 and His353. Residues Asn368 and Asn378 are each glycosylated (N-linked (GlcNAc...) asparagine).

This sequence belongs to the 'GDSL' lipolytic enzyme family.

It is found in the secreted. This Arabidopsis thaliana (Mouse-ear cress) protein is GDSL esterase/lipase At5g08460.